A 182-amino-acid chain; its full sequence is ATP synthase subunit delta (182 aa).

The protein belongs to the ATPase delta chain family. F-type ATPases have 2 components, F(1) - the catalytic core - and F(0) - the membrane proton channel. F(1) has five subunits: alpha(3), beta(3), gamma(1), delta(1), epsilon(1). CF(0) has four main subunits: a(1), b(1), b'(1) and c(10-14). The alpha and beta chains form an alternating ring which encloses part of the gamma chain. F(1) is attached to F(0) by a central stalk formed by the gamma and epsilon chains, while a peripheral stalk is formed by the delta, b and b' chains.

The protein resides in the cellular thylakoid membrane. Functionally, f(1)F(0) ATP synthase produces ATP from ADP in the presence of a proton or sodium gradient. F-type ATPases consist of two structural domains, F(1) containing the extramembraneous catalytic core and F(0) containing the membrane proton channel, linked together by a central stalk and a peripheral stalk. During catalysis, ATP synthesis in the catalytic domain of F(1) is coupled via a rotary mechanism of the central stalk subunits to proton translocation. This protein is part of the stalk that links CF(0) to CF(1). It either transmits conformational changes from CF(0) to CF(1) or is implicated in proton conduction. The polypeptide is ATP synthase subunit delta (Synechococcus sp. (strain JA-2-3B'a(2-13)) (Cyanobacteria bacterium Yellowstone B-Prime)).